Here is a 248-residue protein sequence, read N- to C-terminus: Isoamyl acetate-hydrolyzing esterase 1 homolog (248 aa).

The Nucleophile role is filled by Ser-24. Lys-63 is modified (N6-succinyllysine). Asp-196 serves as the catalytic Proton donor. Residue His-199 is the Proton acceptor of the active site.

The protein belongs to the 'GDSL' lipolytic enzyme family. IAH1 subfamily.

Probable lipase. In Homo sapiens (Human), this protein is Isoamyl acetate-hydrolyzing esterase 1 homolog (IAH1).